The following is a 298-amino-acid chain: Probable deoxyhypusine synthase 2 (298 aa).

The active-site Nucleophile is the Lys259.

This sequence belongs to the deoxyhypusine synthase family. NAD(+) serves as cofactor.

It catalyses the reaction [eIF5A protein]-L-lysine + spermidine = [eIF5A protein]-deoxyhypusine + propane-1,3-diamine. The protein operates within protein modification; eIF5A hypusination. In terms of biological role, catalyzes the NAD-dependent oxidative cleavage of spermidine and the subsequent transfer of the butylamine moiety of spermidine to the epsilon-amino group of a specific lysine residue of the eIF-5A precursor protein to form the intermediate deoxyhypusine residue. The chain is Probable deoxyhypusine synthase 2 (dys2) from Archaeoglobus fulgidus (strain ATCC 49558 / DSM 4304 / JCM 9628 / NBRC 100126 / VC-16).